An 82-amino-acid chain; its full sequence is Small ribosomal subunit protein eS21z (82 aa).

M1 bears the N-acetylmethionine mark.

It belongs to the eukaryotic ribosomal protein eS21 family.

The polypeptide is Small ribosomal subunit protein eS21z (RPS21B) (Arabidopsis thaliana (Mouse-ear cress)).